A 153-amino-acid polypeptide reads, in one-letter code: Small heat shock protein ibp (153 aa).

Positions 35–153 constitute a sHSP domain; the sequence is KIISDSVPPY…KIQKIQINVK (119 aa).

The protein belongs to the small heat shock protein (HSP20) family.

In Buchnera aphidicola subsp. Thelaxes suberi, this protein is Small heat shock protein ibp (ibp).